The following is an 870-amino-acid chain: Suppressor of yeast profilin deletion (870 aa).

Positions 252–267 are enriched in polar residues; sequence SSSSKEVVPNNASPAS. Disordered regions lie at residues 252–298 and 310–574; these read SSSS…RKSA and SSSL…TLSS. Lysine 256 participates in a covalent cross-link: Glycyl lysine isopeptide (Lys-Gly) (interchain with G-Cter in ubiquitin). At serine 264 the chain carries Phosphoserine. Over residues 283–292 the composition is skewed to basic and acidic residues; it reads TEREKKSPQK. The span at 310–323 shows a compositional bias: polar residues; the sequence is SSSLTHNDLMNNEF. Serine 331 carries the phosphoserine modification. Residues 333 to 342 are compositionally biased toward basic residues; the sequence is KSKKSSHTLR. Positions 367–378 are enriched in polar residues; sequence HIQASITETPNN. The span at 379-390 shows a compositional bias: low complexity; sequence SSTRVSSTATSS. The span at 398–409 shows a compositional bias: polar residues; that stretch reads PTYSSSKSNNWT. At threonine 416 the chain carries Phosphothreonine. Residues 473–485 show a composition bias toward low complexity; it reads PISISQPPLQPQS. A phosphoserine mark is found at serine 496 and serine 500. Positions 497–514 are enriched in polar residues; sequence PSISLPTATVDNQPSGQV. Phosphothreonine is present on threonine 577. In terms of domain architecture, MHD spans 609–869; that stretch reads QFGLNASIAE…TLTTGNYHGL (261 aa).

This sequence belongs to the SYP1 family. As to quaternary structure, interacts with CDC3, CDC10, CDC11, CDC12, EDE1 and EPS15.

Its subcellular location is the bud neck. In terms of biological role, multi-functional protein that contributes to the endocytic process, but also to events that occur at the neck during budding and/or cytokinesis. Plays a role as an endocytic adapters with membrane-tubulation activity that associates with transmembrane cargo proteins and initiates the formation of endocytic sites. Contributes to the stabilization of the nascent clathrin-coated pit. Also plays a role in late endocytosis by mediating vesiculation. Involved in the regulation of cell cycle-dependent dynamics of the septin cytoskeleton by promoting septin turnover in different cell cycle stages. May act through the RHO2 signaling pathway to repolarize cortical actin patches in profilin-deficient cells. The protein is Suppressor of yeast profilin deletion (SYP1) of Saccharomyces cerevisiae (strain ATCC 204508 / S288c) (Baker's yeast).